The following is a 214-amino-acid chain: Rho-related GTP-binding protein RhoJ (214 aa).

S-palmitoyl cysteine attachment occurs at residues Cys-3 and Cys-11. Residues 31–36, 46–53, 75–79, 133–136, and 177–178 each bind GTP; these read AVGKTC, FPEEYVPT, DTAGQ, TQID, and AL. Positions 50-58 match the Effector region motif; it reads YVPTVFDHY. Cys-211 carries the post-translational modification Cysteine methyl ester. Cys-211 is lipidated: S-farnesyl cysteine. Positions 212 to 214 are cleaved as a propeptide — removed in mature form; that stretch reads AII.

This sequence belongs to the small GTPase superfamily. Rho family. Interacts with the CRIB domains of proteins such as Pak1 and Was/Wasp. Interacts with GLUL. Palmitoylated; regulates localization to the plasma membrane and may be mediated by GLUL. Highly expressed in heart with moderate levels in lung and liver. Very low levels detected in brain, spleen, skeletal muscle, kidney and testis.

The protein resides in the cell membrane. Plasma membrane-associated small GTPase specifically involved in angiogenesis. Required for endothelial cell migration during vascular development via its interaction with GLUL. Elicits the formation of F-actin-rich structures, thereby regulating endothelial cell migration. In Mus musculus (Mouse), this protein is Rho-related GTP-binding protein RhoJ (Rhoj).